Consider the following 366-residue polypeptide: DNA polymerase processivity factor (366 aa).

A compositionally biased stretch (basic residues) spans 1–16; that stretch reads MERGSRDHHRDHRDHR. Disordered regions lie at residues 1–25 and 286–366; these read MERG…REPP and ESRF…RCVV. Over residues 286 to 308 the composition is skewed to basic and acidic residues; sequence ESRFERMGKQDDGKGDRNHKNED. 2 stretches are compositionally biased toward polar residues: residues 313–322 and 330–339; these read ASKQETQYKI and KNGTAGSSLF.

It belongs to the herpesviridae polymerase accessory protein family.

In terms of biological role, accessory subunit of the DNA polymerase that acts to increase the processivity of polymerization. This chain is DNA polymerase processivity factor (U27), found in Homo sapiens (Human).